An 84-amino-acid chain; its full sequence is Beta-defensin 119 (84 aa).

The signal sequence occupies residues 1–21 (MKFLFLFLAILLATKIPVISG). Cystine bridges form between Cys-28/Cys-55, Cys-35/Cys-49, and Cys-39/Cys-56.

It belongs to the beta-defensin family.

It localises to the secreted. Has antibacterial activity. This Macaca fascicularis (Crab-eating macaque) protein is Beta-defensin 119 (DEFB119).